A 255-amino-acid chain; its full sequence is 5'-nucleotidase SurE (255 aa).

A divalent metal cation-binding residues include Asp8, Asp9, Ser39, and Asn91.

This sequence belongs to the SurE nucleotidase family. Requires a divalent metal cation as cofactor.

It localises to the cytoplasm. It carries out the reaction a ribonucleoside 5'-phosphate + H2O = a ribonucleoside + phosphate. In terms of biological role, nucleotidase that shows phosphatase activity on nucleoside 5'-monophosphates. This is 5'-nucleotidase SurE from Acinetobacter baumannii (strain SDF).